Consider the following 438-residue polypeptide: MTAQTSSDVTDQKTDLTRESERDEVLAKATLAKKVAPEIAQLGTGVKNQILLAAAEALLERSAEIIEANSRDIAAGRESGMAESLIDRLALDEGRIEGIAGGLRQVAGLTDPVGEVLQGRVMENGIQMRQVRVPLGVMGMVYEARPNVTVDAFGLALKSGNVALLRGSSTAVHSNTTLVGILQDVLATFDLPRETVQLLPCATRESVQDLITARGLVDVVIPRGGAGLINAVVMGATVPTIETGTGNCHFYIDGDVDVDSAIAMLINGKTRRCSVCNATETALIDSALPDVDKLRVVRALQDAGVTVHGRVAELEAFGATDVVEATENDWDSEYLSFDIAVAVVDGVDAAIEHIEKYSTHHTEAIATNNVFTAQRFADHVDAAAVMINASTAFTDGEQYGMGAEIGISTQKLHARGPMALPELTSTKWILQGTGHTRP.

The segment at 1-21 is disordered; that stretch reads MTAQTSSDVTDQKTDLTRESE. Basic and acidic residues predominate over residues 10–21; sequence TDQKTDLTRESE.

Belongs to the gamma-glutamyl phosphate reductase family.

Its subcellular location is the cytoplasm. It carries out the reaction L-glutamate 5-semialdehyde + phosphate + NADP(+) = L-glutamyl 5-phosphate + NADPH + H(+). The protein operates within amino-acid biosynthesis; L-proline biosynthesis; L-glutamate 5-semialdehyde from L-glutamate: step 2/2. Functionally, catalyzes the NADPH-dependent reduction of L-glutamate 5-phosphate into L-glutamate 5-semialdehyde and phosphate. The product spontaneously undergoes cyclization to form 1-pyrroline-5-carboxylate. The sequence is that of Gamma-glutamyl phosphate reductase from Corynebacterium efficiens (strain DSM 44549 / YS-314 / AJ 12310 / JCM 11189 / NBRC 100395).